The sequence spans 903 residues: Protein translocase subunit SecA (903 aa).

ATP-binding positions include glutamine 87, 105–109 (GEGKT), and aspartate 512. Residues cysteine 887, cysteine 889, cysteine 898, and histidine 899 each contribute to the Zn(2+) site.

It belongs to the SecA family. In terms of assembly, monomer and homodimer. Part of the essential Sec protein translocation apparatus which comprises SecA, SecYEG and auxiliary proteins SecDF-YajC and YidC. Requires Zn(2+) as cofactor.

The protein resides in the cell inner membrane. It localises to the cytoplasm. It carries out the reaction ATP + H2O + cellular proteinSide 1 = ADP + phosphate + cellular proteinSide 2.. Its function is as follows. Part of the Sec protein translocase complex. Interacts with the SecYEG preprotein conducting channel. Has a central role in coupling the hydrolysis of ATP to the transfer of proteins into and across the cell membrane, serving both as a receptor for the preprotein-SecB complex and as an ATP-driven molecular motor driving the stepwise translocation of polypeptide chains across the membrane. The sequence is that of Protein translocase subunit SecA from Photorhabdus laumondii subsp. laumondii (strain DSM 15139 / CIP 105565 / TT01) (Photorhabdus luminescens subsp. laumondii).